Consider the following 637-residue polypeptide: Serine/threonine-protein kinase Nek11 (637 aa).

Residues 29 to 287 (YVLQQKLGSG…AIEILKIPYI (259 aa)) form the Protein kinase domain. Residues 35–43 (LGSGSFGTV) and Lys-61 contribute to the ATP site. Asp-158 serves as the catalytic Proton acceptor. Residue Ser-273 is modified to Phosphoserine; by CHEK1. Residues 302–385 (TLEDKNLDCQ…QELRSRNFQQ (84 aa)) are a coiled coil. Positions 399 to 446 (GMEEKEEQPEGRPSCSPQDEDEERWQDREEEFDEPTLENLSEPQPIPS) are disordered. Positions 416–434 (QDEDEERWQDREEEFDEPT) are enriched in acidic residues.

The protein belongs to the protein kinase superfamily. NEK Ser/Thr protein kinase family. NIMA subfamily. In terms of assembly, interacts with NEK2. Requires Mn(2+) as cofactor. Mg(2+) is required as a cofactor. In terms of processing, phosphorylated by NEK2. Phosphorylation at Ser-273 is important for its activation.

The protein resides in the nucleus. Its subcellular location is the nucleolus. It catalyses the reaction L-seryl-[protein] + ATP = O-phospho-L-seryl-[protein] + ADP + H(+). The catalysed reaction is L-threonyl-[protein] + ATP = O-phospho-L-threonyl-[protein] + ADP + H(+). Autorepressed by intramolecular binding of the C-terminus which dissociates following phosphorylation by NEK2. Activated in response to DNA damage. Inhibited by zinc. In terms of biological role, protein kinase which plays an important role in the G2/M checkpoint response to DNA damage. Controls degradation of CDC25A by directly phosphorylating it on residues whose phosphorylation is required for BTRC-mediated polyubiquitination and degradation. This chain is Serine/threonine-protein kinase Nek11 (NEK11), found in Macaca fascicularis (Crab-eating macaque).